Consider the following 283-residue polypeptide: uncharacterized protein (283 aa).

A disordered region spans residues 1 to 21 (MSAYTHPMERELSGLSSRGNS). The chain crosses the membrane as a helical span at residues 41–61 (SIFIASLVTFGVLMITLLIAL).

The protein belongs to the APS1/VSP family.

The protein resides in the membrane. This is an uncharacterized protein from Arabidopsis thaliana (Mouse-ear cress).